We begin with the raw amino-acid sequence, 142 residues long: Large ribosomal subunit protein uL13 (142 aa).

The protein belongs to the universal ribosomal protein uL13 family. In terms of assembly, part of the 50S ribosomal subunit.

This protein is one of the early assembly proteins of the 50S ribosomal subunit, although it is not seen to bind rRNA by itself. It is important during the early stages of 50S assembly. The chain is Large ribosomal subunit protein uL13 from Caldicellulosiruptor saccharolyticus (strain ATCC 43494 / DSM 8903 / Tp8T 6331).